A 350-amino-acid polypeptide reads, in one-letter code: Enoyl-[acyl-carrier-protein] reductase, mitochondrial (350 aa).

Residues Met-1–Phe-12 constitute a mitochondrion transit peptide. Catalysis depends on Tyr-68, which acts as the Proton donor. NADP(+) is bound by residues Asn-141, Asn-167 to Val-170, Arg-190 to Arg-192, Tyr-259 to Met-262, Phe-284 to Val-286, and Lys-345.

This sequence belongs to the zinc-containing alcohol dehydrogenase family. Quinone oxidoreductase subfamily. In terms of assembly, homodimer. Expressed in the developing pronephros.

It is found in the mitochondrion. It carries out the reaction a 2,3-saturated acyl-[ACP] + NADP(+) = a (2E)-enoyl-[ACP] + NADPH + H(+). Functionally, catalyzes the NADPH-dependent reduction of trans-2-enoyl thioesters in mitochondrial fatty acid synthesis (fatty acid synthesis type II). Fatty acid chain elongation in mitochondria uses acyl carrier protein (ACP) as an acyl group carrier, but the enzyme accepts both ACP and CoA thioesters as substrates in vitro. May provide the octanoyl chain used for lipoic acid biosynthesis, regulating protein lipoylation and mitochondrial respiratory activity. Involved in iron homeostasis; affecting Fe-S cluster assembly and ceramide metabolism. Required for proper morphology and bioenergetic functions of mitochondria. Required for maintenance of neurons. Functions in pronephros development, regulating late differentiation of all pronephric tubule segments. The protein is Enoyl-[acyl-carrier-protein] reductase, mitochondrial (mecr) of Xenopus tropicalis (Western clawed frog).